Reading from the N-terminus, the 779-residue chain is Lon protease (779 aa).

One can recognise a Lon N-terminal domain in the interval 7–190 (VPVLFLNDSI…LLIGWTGDHL (184 aa)). Residue 352 to 359 (GPPGVGKT) coordinates ATP. In terms of domain architecture, Lon proteolytic spans 589–769 (TAVPGVATGL…ADIIAAALEP (181 aa)). Active-site residues include Ser675 and Lys718.

It belongs to the peptidase S16 family. In terms of assembly, homohexamer. Organized in a ring with a central cavity. Oligomerization is Mg(2+)-dependent.

The protein resides in the cytoplasm. It carries out the reaction Hydrolysis of proteins in presence of ATP.. Its activity is regulated as follows. Stimulated by unfolded protein. Its function is as follows. ATP-dependent serine protease that mediates the selective degradation of mutant and abnormal proteins as well as certain short-lived regulatory proteins. Required for cellular homeostasis and for survival from DNA damage and developmental changes induced by stress. Degrades polypeptides processively to yield small peptide fragments that are 5 to 10 amino acids long. Binds to DNA in a double-stranded, site-specific manner. This Mycolicibacterium smegmatis (Mycobacterium smegmatis) protein is Lon protease.